A 250-amino-acid chain; its full sequence is MNVRRVESISAQLEEASSTGGFLYAQNSTKRSIKERLMKLLPCSAAKTSSPAIQNSVEDELEMATVRHRPEALELLEAQSKFTKKELQILYRGFKNECPSGVVNEETFKEIYSQFFPQGDSTTYAHFLFNAFDTDHNGAVSFEDFIKGLSILLRGTVQEKLNWAFNLYDINKDGYITKEEMLDIMKAIYDMMGKCTYPVLKEDAPRQHVETFFQKMDKNKDGVVTIDEFIESCQKDENIMRSMQLFENVI.

Positions 2–44 (NVRRVESISAQLEEASSTGGFLYAQNSTKRSIKERLMKLLPCS) are KIS. A phosphoserine mark is found at Ser-17 and Ser-56. An EF-hand 1; degenerate domain is found at 61-117 (LEMATVRHRPEALELLEAQSKFTKKELQILYRGFKNECPSGVVNEETFKEIYSQFFP). 3 consecutive EF-hand domains span residues 120–155 (DSTT…LLRG), 156–191 (TVQE…IYDM), and 204–239 (APRQ…DENI). Ca(2+) is bound by residues Asp-133, Asp-135, Asn-137, Asp-144, Asp-169, Asn-171, Asp-173, Tyr-175, Glu-180, Asp-217, Asn-219, Asp-221, and Glu-228. Residues 237–250 (ENIMRSMQLFENVI) are interaction with KCND2.

This sequence belongs to the recoverin family. Component of heteromultimeric potassium channels. Identified in potassium channel complexes containing KCND1, KCND2, KCND3, KCNIP1, KCNIP2, KCNIP3, KCNIP4, DPP6 and DPP10. Interacts with KCND2. Interacts with KCND3. Interacts with the C-terminus of PSEN2 and probably PSEN1.

The protein localises to the cell membrane. It is found in the cytoplasm. It localises to the peroxisome. Functionally, regulatory subunit of Kv4/D (Shal)-type voltage-gated rapidly inactivating A-type potassium channels. Modulates KCND2 channel density, inactivation kinetics and rate of recovery from inactivation in a calcium-dependent and isoform-specific manner. Modulates KCND3/Kv4.3 currents. Isoform 4 does not increase KCND2 expression at the cell membrane. Isoform 4 retains KCND3 in the endoplasmic reticulum and negatively regulates its expression at the cell membrane. The chain is Kv channel-interacting protein 4 (KCNIP4) from Macaca fascicularis (Crab-eating macaque).